Reading from the N-terminus, the 115-residue chain is Con-Ins G1a (115 aa).

An N-terminal signal peptide occupies residues 1–24; the sequence is MTTSSYFLLMALGLLLYVCQSSFG. Positions 25–29 are excised as a propeptide; sequence NQHTR. Pro-34 is subject to 4-hydroxyproline; partial. 3 cysteine pairs are disulfide-bonded: Cys-38–Cys-101, Cys-50–Cys-114, and Cys-100–Cys-105. Glu-41 bears the 4-carboxyglutamate mark. A propeptide spans 53-94 (c peptide); it reads KRNDAGEKRGRASPLWQRRGSLSKLKARAKRNGAFHLPRDGR. Residue Glu-98 is modified to 4-carboxyglutamate. Residue Pro-104 is modified to 4-hydroxyproline; partial. Residue Glu-109 is modified to 4-carboxyglutamate; partial. At Cys-114 the chain carries Cysteine amide.

It belongs to the insulin family. Heterodimer of A and B chains; disulfide-linked. As to expression, expressed by the venom gland.

The protein localises to the secreted. This venom insulin, from a fish-hunting cone snail, facilitates prey capture by rapidly inducing hypoglycemic shock. It is one of the smallest known insulin found in nature and lacks the C-terminal segment of the B chain that, in human insulin, mediates engagement of the insulin receptor (INSR) and assembly of the hormone's hexameric storage form. Despite lacking this segment, it both binds and activates human insulin receptor (long isoform (HIR-B)) with a high potency (EC(50)=16.28 nM). In vivo, intraperitoneal injection of this peptide into zebrafish lowers blood glucose with the same potency than human insulin. In addition, when applied to water, this peptide reduces overall locomotor activity of zebrafish larvae, observed as a significant decrease in the percentage of time spent swimming and movement frequency. When tested on a mouse model of diabetes, this insulin also lowers blood glucose with a 10-fold lower potency than human insulin. This chain is Con-Ins G1a, found in Conus geographus (Geography cone).